The following is a 218-amino-acid chain: Adenylate kinase (218 aa).

An ATP-binding site is contributed by 10 to 15; the sequence is GAGKGT. Residues 30–59 are NMP; the sequence is STGDMLRAAVKAGTPLGLEAKKVMDAGGLV. Residues T31, R36, 57–59, 85–88, and Q92 contribute to the AMP site; these read GLV and GFPR. The tract at residues 122 to 159 is LID; that stretch reads GRRVHPASGRVYHTKYNPPKVEGKDDETGDELVQRDDD. ATP-binding positions include R123 and 132-133; that span reads VY. The disordered stretch occupies residues 139-160; it reads PPKVEGKDDETGDELVQRDDDQ. R156 and R167 together coordinate AMP. Position 203 (G203) interacts with ATP.

It belongs to the adenylate kinase family. As to quaternary structure, monomer.

Its subcellular location is the cytoplasm. The enzyme catalyses AMP + ATP = 2 ADP. It functions in the pathway purine metabolism; AMP biosynthesis via salvage pathway; AMP from ADP: step 1/1. Catalyzes the reversible transfer of the terminal phosphate group between ATP and AMP. Plays an important role in cellular energy homeostasis and in adenine nucleotide metabolism. The chain is Adenylate kinase from Alcanivorax borkumensis (strain ATCC 700651 / DSM 11573 / NCIMB 13689 / SK2).